We begin with the raw amino-acid sequence, 224 residues long: C-&gt;U-editing enzyme APOBEC-2 (224 aa).

Residues 1–23 are disordered; that stretch reads MAQKEEAAEAAAPASQNGDDLEN. Residues glutamate 60 and histidine 98 each coordinate Zn(2+). In terms of domain architecture, CMP/dCMP-type deaminase spans 64–169; that stretch reads GRNKTFLCYV…PEVQAALKKL (106 aa). Residue glutamate 100 is the Proton donor of the active site. The Zn(2+) site is built by cysteine 128 and cysteine 131.

Belongs to the cytidine and deoxycytidylate deaminase family. As to quaternary structure, homotetramer. Zn(2+) serves as cofactor. Expressed exclusively in heart and skeletal muscle.

The enzyme catalyses cytidine(6666) in apoB mRNA + H2O + H(+) = uridine(6666) in apoB mRNA + NH4(+). Functionally, probable C to U editing enzyme whose physiological substrate is not yet known. Does not display detectable apoB mRNA editing. Has a low intrinsic cytidine deaminase activity. May play a role in the epigenetic regulation of gene expression through the process of active DNA demethylation. In Mus musculus (Mouse), this protein is C-&gt;U-editing enzyme APOBEC-2 (Apobec2).